A 426-amino-acid chain; its full sequence is Enolase (426 aa).

A (2R)-2-phosphoglycerate-binding site is contributed by Gln-163. Glu-205 acts as the Proton donor in catalysis. Asp-242, Glu-286, and Asp-313 together coordinate Mg(2+). The (2R)-2-phosphoglycerate site is built by Lys-338, Arg-367, Ser-368, and Lys-389. The active-site Proton acceptor is Lys-338.

The protein belongs to the enolase family. Requires Mg(2+) as cofactor.

It is found in the cytoplasm. The protein resides in the secreted. It localises to the cell surface. It catalyses the reaction (2R)-2-phosphoglycerate = phosphoenolpyruvate + H2O. It functions in the pathway carbohydrate degradation; glycolysis; pyruvate from D-glyceraldehyde 3-phosphate: step 4/5. Its function is as follows. Catalyzes the reversible conversion of 2-phosphoglycerate (2-PG) into phosphoenolpyruvate (PEP). It is essential for the degradation of carbohydrates via glycolysis. The sequence is that of Enolase from Helicobacter pylori (strain J99 / ATCC 700824) (Campylobacter pylori J99).